A 46-amino-acid chain; its full sequence is Large ribosomal subunit protein bL36B (46 aa).

This sequence belongs to the bacterial ribosomal protein bL36 family.

The polypeptide is Large ribosomal subunit protein bL36B (Enterobacter sp. (strain 638)).